Here is a 308-residue protein sequence, read N- to C-terminus: Oligopeptide transport system permease protein AmiD (308 aa).

Transmembrane regions (helical) follow at residues 43–63 (TVVMLGILVAIILISFIYPMF), 111–131 (ILISVIATVINLVIGVFVGGI), 145–167 (VYNVISNIPPLLIVIVLTYSIGA), 171–193 (NLIFAMSVTTWIGIAFMIRVQIL), 234–254 (MLPSFISYEAFLSFFGLGLPI), and 274–294 (AYLFWIPLTTLVLVSLSLFVV). The ABC transmembrane type-1 domain occupies 107–295 (ARNSILISVI…LVSLSLFVVG (189 aa)).

This sequence belongs to the binding-protein-dependent transport system permease family. OppBC subfamily.

It localises to the cell membrane. Its function is as follows. Part of the binding-protein-dependent transport system for oligopeptides; probably responsible for the translocation of the substrate across the membrane. The polypeptide is Oligopeptide transport system permease protein AmiD (amiD) (Streptococcus pneumoniae (strain ATCC BAA-255 / R6)).